We begin with the raw amino-acid sequence, 388 residues long: Probable peptidoglycan glycosyltransferase FtsW (388 aa).

Over 1–19 the chain is Cytoplasmic; it reads MMSPSTSAPHNQPIQPELD. Residues 20 to 40 traverse the membrane as a helical segment; sequence VLLVSTVLLLLGLGLVMVYSA. Topologically, residues 41 to 55 are periplasmic; sequence SIAIAEAKFGEGSSY. Residues 56 to 76 traverse the membrane as a helical segment; it reads YFLARQASYILAGIAVGIGCF. Residues 77–89 lie on the Cytoplasmic side of the membrane; that stretch reads RIPLRWWQAYSHY. A helical membrane pass occupies residues 90–110; the sequence is LLGLGILLLLVVLIPGISHEI. Over 111-116 the chain is Periplasmic; that stretch reads NGSRRW. The helical transmembrane segment at 117–137 threads the bilayer; the sequence is IPLGITSFQPSELMKLIILIF. The Cytoplasmic portion of the chain corresponds to 138-151; the sequence is TADYVVRKAAFKDH. Residues 152–172 traverse the membrane as a helical segment; the sequence is FFKGFLPILALLTIVSLLLLM. Over 173 to 175 the chain is Periplasmic; sequence EPD. Helical transmembrane passes span 176–196 and 197–217; these read LGAT…NGMS and LKMF…LIII. The Periplasmic portion of the chain corresponds to 218–284; that stretch reads EPYRMDRINA…DFMFAVLAEE (67 aa). Residues 285–305 traverse the membrane as a helical segment; sequence LGFAGVVTVISLFFFLLVRIF. At 306–324 the chain is on the cytoplasmic side; it reads KVGRTAARLGDQFGSLVAQ. A helical transmembrane segment spans residues 325–345; the sequence is GIGVWLGLQAFINMGVNMGLL. Residues 346–351 are Periplasmic-facing; it reads PTKGLT. The helical transmembrane segment at 352–372 threads the bilayer; sequence LPFMSYGGSSIVINSIAIAIL. Topologically, residues 373-388 are cytoplasmic; sequence LRIDWENRLKRRGLNA.

This sequence belongs to the SEDS family. FtsW subfamily.

The protein resides in the cell inner membrane. It catalyses the reaction [GlcNAc-(1-&gt;4)-Mur2Ac(oyl-L-Ala-gamma-D-Glu-L-Lys-D-Ala-D-Ala)](n)-di-trans,octa-cis-undecaprenyl diphosphate + beta-D-GlcNAc-(1-&gt;4)-Mur2Ac(oyl-L-Ala-gamma-D-Glu-L-Lys-D-Ala-D-Ala)-di-trans,octa-cis-undecaprenyl diphosphate = [GlcNAc-(1-&gt;4)-Mur2Ac(oyl-L-Ala-gamma-D-Glu-L-Lys-D-Ala-D-Ala)](n+1)-di-trans,octa-cis-undecaprenyl diphosphate + di-trans,octa-cis-undecaprenyl diphosphate + H(+). It functions in the pathway cell wall biogenesis; peptidoglycan biosynthesis. Peptidoglycan polymerase that is essential for cell division. This chain is Probable peptidoglycan glycosyltransferase FtsW, found in Nitrosomonas europaea (strain ATCC 19718 / CIP 103999 / KCTC 2705 / NBRC 14298).